We begin with the raw amino-acid sequence, 691 residues long: Elongation factor G (691 aa).

A tr-type G domain is found at 12–286 (KKLRNIGIMA…GVLEYLPSPL (275 aa)). GTP is bound by residues 21–28 (AHIDAGKT), 85–89 (DTPGH), and 139–142 (NKMD).

This sequence belongs to the TRAFAC class translation factor GTPase superfamily. Classic translation factor GTPase family. EF-G/EF-2 subfamily.

The protein resides in the cytoplasm. Catalyzes the GTP-dependent ribosomal translocation step during translation elongation. During this step, the ribosome changes from the pre-translocational (PRE) to the post-translocational (POST) state as the newly formed A-site-bound peptidyl-tRNA and P-site-bound deacylated tRNA move to the P and E sites, respectively. Catalyzes the coordinated movement of the two tRNA molecules, the mRNA and conformational changes in the ribosome. The protein is Elongation factor G of Thermosipho melanesiensis (strain DSM 12029 / CIP 104789 / BI429).